The chain runs to 64 residues: Large ribosomal subunit protein uL29 (64 aa).

This sequence belongs to the universal ribosomal protein uL29 family.

The protein is Large ribosomal subunit protein uL29 of Porphyromonas gingivalis (strain ATCC 33277 / DSM 20709 / CIP 103683 / JCM 12257 / NCTC 11834 / 2561).